A 325-amino-acid chain; its full sequence is Biotin synthase (325 aa).

Residues 51–280 enclose the Radical SAM core domain; it reads FMGRKADLCT…NVYIRYAGGR (230 aa). Residues Cys-69, Cys-73, and Cys-76 each coordinate [4Fe-4S] cluster. [2Fe-2S] cluster is bound by residues Ser-113, Cys-145, Cys-205, and Arg-275.

This sequence belongs to the radical SAM superfamily. Biotin synthase family. Homodimer. The cofactor is [4Fe-4S] cluster. [2Fe-2S] cluster serves as cofactor.

The catalysed reaction is (4R,5S)-dethiobiotin + (sulfur carrier)-SH + 2 reduced [2Fe-2S]-[ferredoxin] + 2 S-adenosyl-L-methionine = (sulfur carrier)-H + biotin + 2 5'-deoxyadenosine + 2 L-methionine + 2 oxidized [2Fe-2S]-[ferredoxin]. Its pathway is cofactor biosynthesis; biotin biosynthesis; biotin from 7,8-diaminononanoate: step 2/2. Functionally, catalyzes the conversion of dethiobiotin (DTB) to biotin by the insertion of a sulfur atom into dethiobiotin via a radical-based mechanism. This Clostridioides difficile (strain 630) (Peptoclostridium difficile) protein is Biotin synthase.